A 644-amino-acid polypeptide reads, in one-letter code: Sentrin-specific protease 1 (644 aa).

Residues 1–200 are interaction with CCAR2; it reads MDDIADRMRM…REIYRQLLQM (200 aa). Phosphoserine occurs at positions 57, 117, 132, and 157. The segment at 92 to 117 is disordered; the sequence is QSANGQWRNSTPSSSSSLQKSRNSRS. Residues 99–117 are compositionally biased toward low complexity; it reads RNSTPSSSSSLQKSRNSRS. Disordered stretches follow at residues 156-184 and 283-312; these read PSPS…TAEE and SKDS…NTQS. The short motif at 171–177 is the Nuclear localization signal element; that stretch reads PKKTQRR. Residues 450–613 form a protease region; sequence LTITRKDIQT…GMFACKYADC (164 aa). Residues histidine 533 and aspartate 550 contribute to the active site. The Nuclear localization signal signature appears at 574–577; the sequence is KKRK. Catalysis depends on cysteine 603, which acts as the Nucleophile. The short motif at 628–634 is the Nuclear localization signal element; that stretch reads PYFRKRM. Positions 635–644 match the Nuclear export signal motif; that stretch reads VWEILHRKLL.

This sequence belongs to the peptidase C48 family. As to quaternary structure, interacts with RBM33; promoting ALKBH5 desumoylation and subsequent activation. Highly expressed in testis. Expressed at lower levels in thymus, pancreas, spleen, liver, ovary and small intestine.

It localises to the nucleus. The protein localises to the cytoplasm. Its function is as follows. Protease that catalyzes two essential functions in the SUMO pathway. The first is the hydrolysis of an alpha-linked peptide bond at the C-terminal end of the small ubiquitin-like modifier (SUMO) propeptides, SUMO1, SUMO2 and SUMO3 leading to the mature form of the proteins. The second is the deconjugation of SUMO1, SUMO2 and SUMO3 from targeted proteins, by cleaving an epsilon-linked peptide bond between the C-terminal glycine of the mature SUMO and the lysine epsilon-amino group of the target protein. Deconjugates SUMO1 from HIPK2. Deconjugates SUMO1 from HDAC1 and BHLHE40/DEC1, which decreases its transcriptional repression activity. Deconjugates SUMO1 from CLOCK, which decreases its transcriptional activation activity. Deconjugates SUMO2 from MTA1. Inhibits N(6)-methyladenosine (m6A) RNA methylation by mediating SUMO1 deconjugation from METTL3 and ALKBH5: METTL3 inhibits the m6A RNA methyltransferase activity, while ALKBH5 desumoylation promotes m6A demethylation. Desumoylates CCAR2 which decreases its interaction with SIRT1. Deconjugates SUMO1 from GPS2. The sequence is that of Sentrin-specific protease 1 (SENP1) from Homo sapiens (Human).